The chain runs to 721 residues: Angiomotin-like 2a (721 aa).

Residues 35 to 84 (QQALRGGSSGGGAGSPRSSLESLTQEESLSPQLSARQEPQGQEHQGDFQH) form a disordered region. Residues 49–68 (SPRSSLESLTQEESLSPQLS) are compositionally biased toward low complexity. Y103 is modified (phosphotyrosine; by FGFR1). The interval 169–214 (DNIPMSSSHSYPQLSNNHSDTVVNEQSVHQPDQRGPPPEYPFMVRS) is disordered. Polar residues predominate over residues 172-198 (PMSSSHSYPQLSNNHSDTVVNEQSVHQ). Residues 275-531 (ANNFQMEQLI…TRWEQKYLEE (257 aa)) are a coiled coil. A compositionally biased stretch (polar residues) spans 554-567 (INHSPRNSPNSSFN). 2 disordered regions span residues 554 to 575 (INHS…SPNH) and 666 to 709 (DSST…TQIS). The span at 688–702 (SAPEPSTASSSESTS) shows a compositional bias: low complexity. The PDZ-binding motif lies at 718–721 (EILI).

Belongs to the angiomotin family. As to quaternary structure, interacts with SRC. In terms of processing, phosphorylation at Tyr-103 is necessary for efficient binding to SRC and synergistically functioning with SRC to activate the downstream MAPK pathway. Expressed in endothelial cells.

The protein localises to the recycling endosome. It is found in the cytoplasm. Its subcellular location is the cell projection. The protein resides in the podosome. It localises to the cell junction. Required for proper architecture of actin filaments and for cell movements during embryogenesis. Plays a role in the radial actin fiber architecture in skin epithelial cells, thereby maintains cell geometry, size and cell interconnectivity within the skin. Plays an important role in coupling actin fibers to cell junctions in endothelial cells and is therefore required for correct endothelial cell morphology and maintenance of dorsal aorta lumen expansion during embryogenesis. May further play a role in the polarity, proliferation and migration of endothelial cells, and therefore participates in angiogenesis. Inhibits the Wnt/beta-catenin signaling pathway, probably by recruiting CTNNB1 to recycling endosomes and hence preventing its translocation to the nucleus. Regulates the translocation of phosphorylated SRC to peripheral cell-matrix adhesion sites. Selectively promotes FGF-induced MAPK activation through SRC. The sequence is that of Angiomotin-like 2a (amotl2a) from Danio rerio (Zebrafish).